The following is a 998-amino-acid chain: RNA-directed RNA polymerase (998 aa).

2 interaction with host mitochondria outer membrane regions span residues 1-67 (MTLK…DKTK) and 233-250 (VRTS…RMIG). The tract at residues 1-400 (MTLKVILGEH…KPTMPRVHWP (400 aa)) is homomultimerization. A helical membrane pass occupies residues 17 to 34 (LLVGIATVSGCGAVVYCI). A cytoplasmic region spans residues 35 to 998 (SKFWGYGAIA…AQPQPSNNRK (964 aa)). The capping stretch occupies residues 91–282 (NGHAVSGAVR…LVYTIPQYVI (192 aa)). The active-site For RdRp/TNTase activity is aspartate 692. The homomultimerization stretch occupies residues 700–800 (IQKSINRAAK…MVLRLYGPTA (101 aa)). Positions 901–998 (AKQTRANPGT…AQPQPSNNRK (98 aa)) are disordered. Polar residues-rich tracts occupy residues 904-913 (TRANPGTSRP) and 947-961 (GKTN…TAGE). Residues 971–984 (KGPRGGKTNTRRTP) are compositionally biased toward basic residues.

It belongs to the nodaviridae RNA polymerase family. In terms of assembly, homododecamer. Forms 2 stacked rings of 35-nm in diameter, arranged in a crown-like structure at the opening of virus-induced replication vesicles. Interacts with protein B2. Mn(2+) is required as a cofactor.

The protein localises to the host mitochondrion outer membrane. The enzyme catalyses RNA(n) + a ribonucleoside 5'-triphosphate = RNA(n+1) + diphosphate. Its activity is regulated as follows. Drastically inhibited by phosphonoacetic acid. Only slightly inhibited by gliotoxin. Its function is as follows. RNA-dependent RNA polymerase, which replicates the viral genome composed of 2 RNA segments, RNA1 and RNA2. Does not need an exogenous primer. Also possesses a terminal nucleotidyl transferase (TNTase) activity. The TNTase catalyzes the addition of nucleotide to the 3'-end of plus- and minus-stranded RNAs, probably to repair the 3'-end nucleotide loss. Forms the open necked connection to the cytosol of the virus-induced replication vesicles. Mediates viral RNA1 recruitment. This Costelytra zealandica (Greater wax moth) protein is RNA-directed RNA polymerase.